The primary structure comprises 180 residues: Aspartate 1-decarboxylase (180 aa).

S24 acts as the Schiff-base intermediate with substrate; via pyruvic acid in catalysis. A Pyruvic acid (Ser) modification is found at S24. T56 serves as a coordination point for substrate. Catalysis depends on Y57, which acts as the Proton donor. 72-74 (GAA) serves as a coordination point for substrate.

This sequence belongs to the PanD family. Heterooctamer of four alpha and four beta subunits. Requires pyruvate as cofactor. Is synthesized initially as an inactive proenzyme, which is activated by self-cleavage at a specific serine bond to produce a beta-subunit with a hydroxyl group at its C-terminus and an alpha-subunit with a pyruvoyl group at its N-terminus.

The protein localises to the cytoplasm. It carries out the reaction L-aspartate + H(+) = beta-alanine + CO2. It participates in cofactor biosynthesis; (R)-pantothenate biosynthesis; beta-alanine from L-aspartate: step 1/1. Catalyzes the pyruvoyl-dependent decarboxylation of aspartate to produce beta-alanine. This is Aspartate 1-decarboxylase from Paramagnetospirillum magneticum (strain ATCC 700264 / AMB-1) (Magnetospirillum magneticum).